The chain runs to 66 residues: Large ribosomal subunit protein bL31 (66 aa).

Residues Cys-16, Cys-18, Cys-36, and Cys-39 each coordinate Zn(2+).

This sequence belongs to the bacterial ribosomal protein bL31 family. Type A subfamily. As to quaternary structure, part of the 50S ribosomal subunit. Requires Zn(2+) as cofactor.

Its function is as follows. Binds the 23S rRNA. The chain is Large ribosomal subunit protein bL31 from Nautilia profundicola (strain ATCC BAA-1463 / DSM 18972 / AmH).